The sequence spans 360 residues: Phospho-N-acetylmuramoyl-pentapeptide-transferase (360 aa).

A run of 10 helical transmembrane segments spans residues 26–46 (TILG…AVIQ), 70–90 (GTPT…TLLW), 97–117 (YVWV…VDDY), 132–152 (AKFF…FSTA), 168–188 (VVLP…VGSS), 199–219 (GLAI…AYAT), 236–256 (AGEV…FLWF), 263–283 (VFMG…LAVV), 288–308 (LVLL…MLQV), and 338–358 (VIVR…AMLK).

The protein belongs to the glycosyltransferase 4 family. MraY subfamily. Mg(2+) serves as cofactor.

It localises to the cell inner membrane. The catalysed reaction is UDP-N-acetyl-alpha-D-muramoyl-L-alanyl-gamma-D-glutamyl-meso-2,6-diaminopimeloyl-D-alanyl-D-alanine + di-trans,octa-cis-undecaprenyl phosphate = di-trans,octa-cis-undecaprenyl diphospho-N-acetyl-alpha-D-muramoyl-L-alanyl-D-glutamyl-meso-2,6-diaminopimeloyl-D-alanyl-D-alanine + UMP. Its pathway is cell wall biogenesis; peptidoglycan biosynthesis. Its function is as follows. Catalyzes the initial step of the lipid cycle reactions in the biosynthesis of the cell wall peptidoglycan: transfers peptidoglycan precursor phospho-MurNAc-pentapeptide from UDP-MurNAc-pentapeptide onto the lipid carrier undecaprenyl phosphate, yielding undecaprenyl-pyrophosphoryl-MurNAc-pentapeptide, known as lipid I. This chain is Phospho-N-acetylmuramoyl-pentapeptide-transferase, found in Alkalilimnicola ehrlichii (strain ATCC BAA-1101 / DSM 17681 / MLHE-1).